The sequence spans 307 residues: Putative protein p53 (307 aa).

The segment covering 44 to 53 has biased composition (basic and acidic residues); that stretch reads DPHEPTEANK. Disordered regions lie at residues 44–64 and 109–129; these read DPHE…VKPQ and ETKP…APEP.

This chain is Putative protein p53 (53), found in Escherichia coli (Bacteriophage APSE-1).